Here is a 63-residue protein sequence, read N- to C-terminus: Eumenitin VP1 (63 aa).

Residues 1 to 22 (MRGTSFILFAVVVILGFLHANA) form the signal peptide. 5 AXPX repeats span residues 22-25 (AEPL), 26-29 (ANPA), 32-35 (ANPD), 40-43 (ADPL), and 44-47 (ADPE). Residues 23–48 (EPLANPAPLANPDPLANADPLADPEA) constitute a propeptide that is removed on maturation.

Expressed by the venom gland.

The protein localises to the secreted. It is found in the target cell membrane. Its function is as follows. Antimicrobial peptide with activities against the fungi B.cinerea (MIC=5 uM) and C.albicans (MIC=100 uM), the Gram-negative bacterium E.coli (MIC=25 uM) and the Gram-positive bacterium S.aureus (MIC=100 uM). Shows cytolytic activity against insect cell lines. Has no hemolytic activity against human erythrocytes. In vivo, peptide injection in the vicinity of the head and thorax of lepidopteran larvae induces feeding disorder followed by death due to starvation. This chain is Eumenitin VP1, found in Eumenes pomiformis (Potter wasp).